Consider the following 322-residue polypeptide: DNA repair and recombination protein RadA (322 aa).

ATP is bound at residue 105–112 (GMYGSGKT).

It belongs to the eukaryotic RecA-like protein family.

Its function is as follows. Involved in DNA repair and in homologous recombination. Binds and assemble on single-stranded DNA to form a nucleoprotein filament. Hydrolyzes ATP in a ssDNA-dependent manner and promotes DNA strand exchange between homologous DNA molecules. The sequence is that of DNA repair and recombination protein RadA from Methanococcus maripaludis (strain C6 / ATCC BAA-1332).